We begin with the raw amino-acid sequence, 82 residues long: DNA-directed RNA polymerase subunit Rpo5 (82 aa).

Belongs to the archaeal Rpo5/eukaryotic RPB5 RNA polymerase subunit family. As to quaternary structure, part of the RNA polymerase complex.

The protein resides in the cytoplasm. It carries out the reaction RNA(n) + a ribonucleoside 5'-triphosphate = RNA(n+1) + diphosphate. Its function is as follows. DNA-dependent RNA polymerase (RNAP) catalyzes the transcription of DNA into RNA using the four ribonucleoside triphosphates as substrates. The polypeptide is DNA-directed RNA polymerase subunit Rpo5 (Pyrococcus horikoshii (strain ATCC 700860 / DSM 12428 / JCM 9974 / NBRC 100139 / OT-3)).